Consider the following 394-residue polypeptide: MAKRDYYEVLGVDKNASENDIKKAYRKAAMKYHPDKFANATDAEKKDAEEKFKEINEAYQVLSDNEKKQQYDQFGHAAFEQGGAGFGGGFNAGGFDFGDIFGDNIFGGGGGFGGFEGFSGFGGSSRRSYVEPGNDLRYNLEITLEEAAKGVEKTIKYKRTGKCEHCHGTGAEDDKMKTCPTCNGQGTIKTQQRTILGVMQSQSVCPDCHGTGKVPEKKCKHCRGTGTAKETVEKKINVPAGIDDGQKLKYAGLGEASQSGGPNGDLYIVIRIKPHDIFIRQGDNLYCEVPISYSTAVLGGEVEVPTLNGKKTVKVPEGTESGKLLKVSGEGIKSLKGYGKGDIIVKFTIETPKKLTDKQKELLQKFEESLNDKNYEQKTSFMKRLKKIFKDIID.

The region spanning Asp-5 to Gly-75 is the J domain. The CR-type zinc-finger motif lies at Gly-150–Thr-231. Residues Cys-163, Cys-166, Cys-179, Cys-182, Cys-205, Cys-208, Cys-219, and Cys-222 each contribute to the Zn(2+) site. CXXCXGXG motif repeat units follow at residues Cys-163–Gly-170, Cys-179–Gly-186, Cys-205–Gly-212, and Cys-219–Gly-226.

The protein belongs to the DnaJ family. In terms of assembly, homodimer. Zn(2+) serves as cofactor.

It localises to the cytoplasm. Participates actively in the response to hyperosmotic and heat shock by preventing the aggregation of stress-denatured proteins and by disaggregating proteins, also in an autonomous, DnaK-independent fashion. Unfolded proteins bind initially to DnaJ; upon interaction with the DnaJ-bound protein, DnaK hydrolyzes its bound ATP, resulting in the formation of a stable complex. GrpE releases ADP from DnaK; ATP binding to DnaK triggers the release of the substrate protein, thus completing the reaction cycle. Several rounds of ATP-dependent interactions between DnaJ, DnaK and GrpE are required for fully efficient folding. Also involved, together with DnaK and GrpE, in the DNA replication of plasmids through activation of initiation proteins. This Fusobacterium nucleatum subsp. polymorphum (Fusobacterium polymorphum) protein is Chaperone protein DnaJ.